We begin with the raw amino-acid sequence, 306 residues long: MAHHENQTNCNDERGICSLDSDADDQKQKKRKPLEIYTFIDPLCPECWAFEPILKKLQVEYGQYFRIRFIVAGKLEAWNLCRGKYKGAQSREDLAHVWRKITETFGMPCDGDVWLEDPITSSYTPSLAIKAAELQGPQAGVRFLRKLREHLFLNKQNVTKEDILISCAQRAGLDVKEFKQDLHSKGAAKALRCDMQTTKEMDVDLVPTFVFFNDNVDEEGIKVTGHYPYHIYVQILEDMLGFKPERQPPMSLEHFLKKYEFVASIEVAVVFDLEIDEAEKQLKKLVLKQKLELVPMKYGNFWRYLE.

This sequence belongs to the SpxH family. Interacts with Spx.

The protein localises to the cytoplasm. Adapter protein required for efficient degradation of Spx by ClpXP under non-stress conditions. Interaction with Spx stabilizes Spx and exposes the C-terminus of Spx for recognition and proteolysis by ClpXP. This is ClpXP adapter protein SpxH from Halalkalibacterium halodurans (strain ATCC BAA-125 / DSM 18197 / FERM 7344 / JCM 9153 / C-125) (Bacillus halodurans).